The following is a 939-amino-acid chain: cGMP-dependent 3',5'-cyclic phosphodiesterase (939 aa).

Glycine 2 carries the N-myristoyl glycine lipid modification. 2 S-palmitoyl cysteine lipidation sites follow: cysteine 5 and cysteine 11. Positions 16–38 (YPAARPAEPRGQQVFLKPDEPPP) are disordered. Serine 116 carries the phosphoserine modification. The tract at residues 197–217 (PEAVQNTSVDASEDQKDEKGY) is disordered. 2 consecutive GAF domains span residues 236 to 373 (ATSL…HYTG) and 408 to 547 (DVSV…GISI). Residues serine 430, aspartate 445, isoleucine 464, tyrosine 487, and threonine 498 each coordinate 3',5'-cyclic GMP. One can recognise a PDEase domain in the interval 577-901 (SDDEYTKLLH…EHWTKVSHKF (325 aa)). The Proton donor role is filled by histidine 655. Zn(2+) contacts are provided by histidine 659, histidine 695, aspartate 696, and aspartate 807. A Mg(2+)-binding site is contributed by aspartate 696.

It belongs to the cyclic nucleotide phosphodiesterase family. PDE2 subfamily. As to quaternary structure, homodimer. Zn(2+) serves as cofactor. Requires Mg(2+) as cofactor. In terms of tissue distribution, expressed in brain and liver (at protein level).

It is found in the cytoplasm. Its subcellular location is the mitochondrion matrix. The protein localises to the mitochondrion inner membrane. The protein resides in the mitochondrion outer membrane. It localises to the cell membrane. The enzyme catalyses a nucleoside 3',5'-cyclic phosphate + H2O = a nucleoside 5'-phosphate + H(+). The catalysed reaction is 3',5'-cyclic GMP + H2O = GMP + H(+). It catalyses the reaction 3',5'-cyclic AMP + H2O = AMP + H(+). The 3',5'-cyclic-AMP phosphodiesterase activity is stimulated by 3',5'-cyclic GMP. Specifically inhibited by Bay 60-7550. Its function is as follows. cGMP-activated cyclic nucleotide phosphodiesterase with a dual-specificity for the second messengers cAMP and cGMP, which are key regulators of many important physiological processes. Has a higher efficiency with cGMP compared to cAMP. Plays a role in cell growth and migration. Functionally, regulates mitochondrial cAMP levels and respiration. Involved in the regulation of mitochondria morphology/dynamics and apoptotic cell death via local modulation of cAMP/PKA signaling in the mitochondrion, including the monitoring of local cAMP levels at the outer mitochondrial membrane and of PKA-dependent phosphorylation of DNM1L. The protein is cGMP-dependent 3',5'-cyclic phosphodiesterase of Mus musculus (Mouse).